We begin with the raw amino-acid sequence, 602 residues long: MPSAKQRGSKGGHGAASPSEKGAHPSGGADDVAKKPPPAPQQPPPPPAPHPQQHPQQHPQNQAHGKGGHRGGGGGGGKSSSSSSASAAAAAAAASSSASCSRRLGRALNFLFYLALVAAAAFSGWCVHHVLEEVQQVRRSHQDFSRQREELGQGLQGVEQKVQSLQATFGTFESILRSSQHKQDLTEKAVKQGESEVSRISEVLQKLQNEILKDLSDGIHVVKDARERDFTSLENTVEERLTELTKSINDNIAIFTEVQKRSQKEINDMKAKVASLEESEGNKQDLKALKEAVKEIQTSAKSREWDMEALRSTLQTMESDIYTEVRELVSLKQEQQAFKEAADTERLALQALTEKLLRSEESVSRLPEEIRRLEEELRQLKSDSHGPKEDGGFRHSEAFEALQQKSQGLDSRLQHVEDGVLSMQVASARQTESLESLLSKSQEHEQRLAALQGRLEGLGSSEADQDGLASTVRSLGETQLVLYGDVEELKRSVGELPSTVESLQKVQEQVHTLLSQDQAQAARLPPQDFLDRLSSLDNLKASVSQVEADLKMLRTAVDSLVAYSVKIETNENNLESAKGLLDDLRNDLDRLFVKVEKIHEKV.

Positions 1–83 (MPSAKQRGSK…GGGGKSSSSS (83 aa)) are disordered. Residues 1–106 (MPSAKQRGSK…SASCSRRLGR (106 aa)) lie on the Cytoplasmic side of the membrane. 3 positions are modified to phosphoserine: S3, S17, and S19. At K21 the chain carries N6-acetyllysine. The span at 35 to 52 (KPPPAPQQPPPPPAPHPQ) shows a compositional bias: pro residues. Over residues 53–64 (QHPQQHPQNQAH) the composition is skewed to low complexity. C100 carries S-palmitoyl cysteine; by ZDHHC2 lipidation. A helical membrane pass occupies residues 107–127 (ALNFLFYLALVAAAAFSGWCV). The Extracellular segment spans residues 128–602 (HHVLEEVQQV…VKVEKIHEKV (475 aa)). Residues 130–214 (VLEEVQQVRR…QKLQNEILKD (85 aa)) adopt a coiled-coil conformation. The residue at position 232 (S232) is a Phosphoserine; by FAM20C. 2 coiled-coil regions span residues 256–460 (TEVQ…GLGS) and 533–602 (LSSL…HEKV). Residue S312 is modified to Phosphoserine.

In terms of assembly, interacts with REEP5. Post-translationally, reversibly palmitoylated. Palmitoylation at Cys-100 by ZDHHC2 is required for its trafficking from the ER to the plasma membrane and for its perinuclear localization. Palmitoylation by ZDHHC2 is also required for its function in APF-mediated antiproliferative signaling. In terms of processing, increased phosphorylation during mitosis prevents binding to microtubules.

It localises to the endoplasmic reticulum membrane. Its subcellular location is the cell membrane. The protein resides in the cytoplasm. The protein localises to the cytoskeleton. It is found in the perinuclear region. Functionally, mediates the anchoring of the endoplasmic reticulum to microtubules. High-affinity epithelial cell surface receptor for the FZD8-related low molecular weight sialoglycopeptide APF/antiproliferative factor. Mediates the APF antiproliferative signaling within cells. The protein is Cytoskeleton-associated protein 4 (CKAP4) of Homo sapiens (Human).